We begin with the raw amino-acid sequence, 712 residues long: Phosphoribosylformylglycinamidine synthase subunit PurL (712 aa).

His-32 is a catalytic residue. ATP is bound at residue Tyr-35. Glu-76 contributes to the Mg(2+) binding site. Residues 77–80 and Arg-99 contribute to the substrate site; that span reads SHNH. His-78 acts as the Proton acceptor in catalysis. Position 100 (Asp-100) interacts with Mg(2+). Residue Gln-223 participates in substrate binding. Asp-251 lines the Mg(2+) pocket. Substrate is bound at residue 295-297; sequence ESQ. Residues Asp-470 and Gly-507 each coordinate ATP. Mg(2+) is bound at residue Asn-508. Position 510 (Ser-510) interacts with substrate.

This sequence belongs to the FGAMS family. As to quaternary structure, monomer. Part of the FGAM synthase complex composed of 1 PurL, 1 PurQ and 2 PurS subunits.

It is found in the cytoplasm. The catalysed reaction is N(2)-formyl-N(1)-(5-phospho-beta-D-ribosyl)glycinamide + L-glutamine + ATP + H2O = 2-formamido-N(1)-(5-O-phospho-beta-D-ribosyl)acetamidine + L-glutamate + ADP + phosphate + H(+). It participates in purine metabolism; IMP biosynthesis via de novo pathway; 5-amino-1-(5-phospho-D-ribosyl)imidazole from N(2)-formyl-N(1)-(5-phospho-D-ribosyl)glycinamide: step 1/2. In terms of biological role, part of the phosphoribosylformylglycinamidine synthase complex involved in the purines biosynthetic pathway. Catalyzes the ATP-dependent conversion of formylglycinamide ribonucleotide (FGAR) and glutamine to yield formylglycinamidine ribonucleotide (FGAM) and glutamate. The FGAM synthase complex is composed of three subunits. PurQ produces an ammonia molecule by converting glutamine to glutamate. PurL transfers the ammonia molecule to FGAR to form FGAM in an ATP-dependent manner. PurS interacts with PurQ and PurL and is thought to assist in the transfer of the ammonia molecule from PurQ to PurL. The sequence is that of Phosphoribosylformylglycinamidine synthase subunit PurL from Thermococcus gammatolerans (strain DSM 15229 / JCM 11827 / EJ3).